The primary structure comprises 839 residues: Taste receptor type 1 member 2 (839 aa).

Residues 1–19 (MGPRAKTISSLFFLLWVLA) form the signal peptide. Topologically, residues 20-566 (EPAENSDFYL…VFLEWHEAPT (547 aa)) are extracellular. Residues N84, N248, N292, N312, N368, N428, N487, and N527 are each glycosylated (N-linked (GlcNAc...) asparagine). The helical transmembrane segment at 567–587 (IAVALLAALGFLSTLAILVIF) threads the bilayer. Over 588–602 (WRHFQTPIVRSAGGP) the chain is Cytoplasmic. Residues 603–623 (MCFLMLTLLLVAYMVVPVYVG) form a helical membrane-spanning segment. Residues 624–635 (PPKVSTCLCRQA) are Extracellular-facing. A helical transmembrane segment spans residues 636–656 (LFPLCFTICISCIAVRSFQIV). The Cytoplasmic segment spans residues 657–681 (CAFKMASRFPRAYSYWVRYQGPYVS). The helical transmembrane segment at 682–702 (MAFITVLKMVIVVIGMLATGL) threads the bilayer. At 703–727 (SPTTRTDPDDPKITIVSCNPNYRNS) the chain is on the extracellular side. A helical transmembrane segment spans residues 728–748 (LLFNTSLDLLLSVVGFSFAYM). Over 749 to 760 (GKELPTNYNEAK) the chain is Cytoplasmic. Residues 761–781 (FITLSMTFYFTSSVSLCTFMS) traverse the membrane as a helical segment. Topologically, residues 782-784 (AYS) are extracellular. Residues 785-805 (GVLVTIVDLLVTVLNLLAISL) traverse the membrane as a helical segment. The Cytoplasmic segment spans residues 806–839 (GYFGPKCYMILFYPERNTPAYFNSMIQGYTMRRD).

The protein belongs to the G-protein coupled receptor 3 family. TAS1R subfamily. Forms heterodimers with TAS1R3.

It is found in the cell membrane. Its function is as follows. Putative taste receptor. TAS1R2/TAS1R3 recognizes diverse natural and synthetic sweeteners. The chain is Taste receptor type 1 member 2 (TAS1R2) from Homo sapiens (Human).